The sequence spans 732 residues: Guanylate cyclase soluble subunit alpha-2 (732 aa).

Residues 1-58 are disordered; the sequence is MSRRKISSESFSSLGSDYLETSPEEEGECPLSRLCWNGSRSPPGPLEPSPAAAAAAAA. Residues 49–58 are compositionally biased toward low complexity; the sequence is SPAAAAAAAA. Residues 521–648 form the Guanylate cyclase domain; the sequence is TMLFSDIVGF…NNVTLASKFE (128 aa).

The protein belongs to the adenylyl cyclase class-4/guanylyl cyclase family. In terms of assembly, heterodimer of an alpha and a beta chain. As to expression, isoform 1 is expressed in fetal brain, liver, colon, endothelium and testis. Isoform 2 is expressed only in liver, colon and endothelium.

It is found in the cytoplasm. It catalyses the reaction GTP = 3',5'-cyclic GMP + diphosphate. Its activity is regulated as follows. Activated by nitric oxide in the presence of magnesium or manganese ions. Functionally, has guanylyl cyclase on binding to the beta-1 subunit. In terms of biological role, isoform 2 acts as a negative regulator of guanylyl cyclase activity as it forms non-functional heterodimers with the beta subunits. This is Guanylate cyclase soluble subunit alpha-2 (GUCY1A2) from Homo sapiens (Human).